Consider the following 116-residue polypeptide: MLNVTKGKEIRIEVRFADNFIKRFLGLMFRKPRYVLIFVLPLETRINASVHGLFMREAIDVIFLNSNKEVVDLTVLKPWRFYVPKRPAKYIVEGPRGIIEALSVEVGDRLEWNRMI.

It belongs to the UPF0127 family.

The chain is UPF0127 protein PF1050 from Pyrococcus furiosus (strain ATCC 43587 / DSM 3638 / JCM 8422 / Vc1).